We begin with the raw amino-acid sequence, 764 residues long: MLDLTNQESDSSENGNSKYADSTDGRGIGTSRRLDDEDLDERRKDLADLVFWMSGLKATTLPLDDHTSLCNGRAFAEILHEIDRSFFDERWLETMPEMRTSSNLVVKRSNLRKLWRKMSDYIQVLNRKVVSTRWTEIGDRLDGLDETDIPVAADLAMAVVSLAFIGKTQEKYIQYSQELPAGEHQHMMANVARLVQIVMEELPEVPTFHEISELDGSQNELNSSHVESSVITNGNGSAERRSTLSANDQVLVEAQLEIDELRSERDNLIKDVERLTKALESSQLDTSTCSEPNELSILEKQNEELRVKRRQAEERVLELEASMEHFQAIVVKLTDENDTLQSGQKELNMLKTHLDTAQSDVEEWRTIANKYQSDAEMLKKREKEVKELQGQVKSLTSRLEHHVKTATIDEDNKAGIVQLRSQIGTLTANNVELNVGLESKKRIVEQLELQLIQYKEKVKELEDRKEDLIAERNELENKLLFKESVTPRSLHESMFEAGHLSFDDKTKLPLEIENKRLTERIQELESLEPLKGEIIKMKSQNGVLEEEKLVITKQMEELERQVADLQEKLTKNQQHASGDVVELKVQLEKANVEVERMRETEMRTEAKLAGVEELLRKRNVEKEANETALQKAKAVIDELESRNRPVGEDNKTSVQDFKELKTENELLRQKNEALETALNTTTQSLEQENRLITSAAHQQILDRSSDSMMIMRAQAGSDHPQTLLDTQKMTRALPWRFGISSMLIIFMVWFFINTFCEVNAPPKA.

The span at 1–20 shows a compositional bias: polar residues; that stretch reads MLDLTNQESDSSENGNSKYA. Residues 1-33 form a disordered region; that stretch reads MLDLTNQESDSSENGNSKYADSTDGRGIGTSRR. Residues 1 to 236 form an interaction with dli-1 region; sequence MLDLTNQESD…ESSVITNGNG (236 aa). Positions 43–169 constitute a Calponin-homology (CH) domain; sequence RKDLADLVFW…VSLAFIGKTQ (127 aa). Coiled coils occupy residues 244-405 and 436-692; these read LSAN…HVKT and GLES…NRLI. The chain crosses the membrane as a helical span at residues 732-752; sequence ALPWRFGISSMLIIFMVWFFI.

This sequence belongs to the hook family. In terms of assembly, homodimer. Interacts with the dynein subunit dli-1 via its N-terminus. May interact with microtubules.

Its subcellular location is the nucleus membrane. It localises to the cytoplasm. The protein localises to the cytoskeleton. It is found in the microtubule organizing center. The protein resides in the centrosome. Cytoskeletal linker protein, which is essential for attachment of the centrosome to the nucleus. Required for dynein localization to the nuclear envelope. In Caenorhabditis briggsae, this protein is Zygote defective protein 12 (zyg-12).